The chain runs to 423 residues: Probable efflux pump mfs2 (423 aa).

The next 11 membrane-spanning stretches (helical) occupy residues 21-41, 49-69, 79-99, 111-131, 138-158, 220-240, 256-278, 295-315, 319-339, 360-380, and 392-411; these read TMAL…IGPV, SIFH…GFAH, LLAG…LGDV, LYLL…GFIV, WMFW…LLFH, AILE…FSAL, YIVI…DYAY, IPLL…YGWA, HLIW…MQIF, AATQ…SNSL, and LLAF…LWRW.

The protein belongs to the major facilitator superfamily.

Its subcellular location is the membrane. Probable efflux pump; part of the gene cluster 27 that mediates the biosynthesis of asparasone A, a sclerotium-specific anthraquinone pigment important for sclerotial survival. The polypeptide is Probable efflux pump mfs2 (Aspergillus flavus (strain ATCC 200026 / FGSC A1120 / IAM 13836 / NRRL 3357 / JCM 12722 / SRRC 167)).